The chain runs to 515 residues: Histidine ammonia-lyase (515 aa).

The segment at residues 142-144 (ASG) is a cross-link (5-imidazolinone (Ala-Gly)). Ser143 bears the 2,3-didehydroalanine (Ser) mark.

It belongs to the PAL/histidase family. Post-translationally, contains an active site 4-methylidene-imidazol-5-one (MIO), which is formed autocatalytically by cyclization and dehydration of residues Ala-Ser-Gly.

It localises to the cytoplasm. The enzyme catalyses L-histidine = trans-urocanate + NH4(+). It functions in the pathway amino-acid degradation; L-histidine degradation into L-glutamate; N-formimidoyl-L-glutamate from L-histidine: step 1/3. The chain is Histidine ammonia-lyase from Methylobacterium nodulans (strain LMG 21967 / CNCM I-2342 / ORS 2060).